A 139-amino-acid chain; its full sequence is S-adenosylmethionine decarboxylase proenzyme (139 aa).

The active-site Schiff-base intermediate with substrate; via pyruvic acid is S63. S63 carries the pyruvic acid (Ser); by autocatalysis modification. The Proton acceptor; for processing activity role is filled by H68. Catalysis depends on C83, which acts as the Proton donor; for catalytic activity.

This sequence belongs to the prokaryotic AdoMetDC family. Type 1 subfamily. As to quaternary structure, heterotetramer of two alpha and two beta chains arranged as a dimer of alpha/beta heterodimers. The cofactor is pyruvate. Is synthesized initially as an inactive proenzyme. Formation of the active enzyme involves a self-maturation process in which the active site pyruvoyl group is generated from an internal serine residue via an autocatalytic post-translational modification. Two non-identical subunits are generated from the proenzyme in this reaction, and the pyruvate is formed at the N-terminus of the alpha chain, which is derived from the carboxyl end of the proenzyme. The post-translation cleavage follows an unusual pathway, termed non-hydrolytic serinolysis, in which the side chain hydroxyl group of the serine supplies its oxygen atom to form the C-terminus of the beta chain, while the remainder of the serine residue undergoes an oxidative deamination to produce ammonia and the pyruvoyl group blocking the N-terminus of the alpha chain.

It catalyses the reaction S-adenosyl-L-methionine + H(+) = S-adenosyl 3-(methylsulfanyl)propylamine + CO2. It functions in the pathway amine and polyamine biosynthesis; S-adenosylmethioninamine biosynthesis; S-adenosylmethioninamine from S-adenosyl-L-methionine: step 1/1. Its function is as follows. Catalyzes the decarboxylation of S-adenosylmethionine to S-adenosylmethioninamine (dcAdoMet), the propylamine donor required for the synthesis of the polyamines spermine and spermidine from the diamine putrescine. The sequence is that of S-adenosylmethionine decarboxylase proenzyme from Pyrococcus horikoshii (strain ATCC 700860 / DSM 12428 / JCM 9974 / NBRC 100139 / OT-3).